A 129-amino-acid chain; its full sequence is uncharacterized protein (129 aa).

3 helical membrane passes run 49 to 69, 72 to 92, and 101 to 118; these read LWSLYSMMLHILGFLANIVGV, FTIFAFSPADIAVYHFFNLIF, and YFNCVILCTCVSVYNLLQ.

Its subcellular location is the membrane. This is an uncharacterized protein from Saccharomyces cerevisiae (strain ATCC 204508 / S288c) (Baker's yeast).